Consider the following 217-residue polypeptide: Probable nicotinate-nucleotide adenylyltransferase (217 aa).

It belongs to the NadD family.

It catalyses the reaction nicotinate beta-D-ribonucleotide + ATP + H(+) = deamido-NAD(+) + diphosphate. It participates in cofactor biosynthesis; NAD(+) biosynthesis; deamido-NAD(+) from nicotinate D-ribonucleotide: step 1/1. Catalyzes the reversible adenylation of nicotinate mononucleotide (NaMN) to nicotinic acid adenine dinucleotide (NaAD). In Moorella thermoacetica (strain ATCC 39073 / JCM 9320), this protein is Probable nicotinate-nucleotide adenylyltransferase.